Reading from the N-terminus, the 383-residue chain is Galactokinase (383 aa).

34–37 serves as a coordination point for substrate; the sequence is EHTD. Position 124-130 (124-130) interacts with ATP; sequence GAGLSSS. 2 residues coordinate Mg(2+): S130 and E162. The Proton acceptor role is filled by D174. Y223 is a substrate binding site.

It belongs to the GHMP kinase family. GalK subfamily.

It is found in the cytoplasm. The enzyme catalyses alpha-D-galactose + ATP = alpha-D-galactose 1-phosphate + ADP + H(+). It participates in carbohydrate metabolism; galactose metabolism. Functionally, catalyzes the transfer of the gamma-phosphate of ATP to D-galactose to form alpha-D-galactose-1-phosphate (Gal-1-P). This is Galactokinase from Yersinia enterocolitica serotype O:8 / biotype 1B (strain NCTC 13174 / 8081).